We begin with the raw amino-acid sequence, 134 residues long: Phosphoribosyl-AMP cyclohydrolase (134 aa).

Residue Asp-80 coordinates Mg(2+). Cys-81 is a Zn(2+) binding site. Mg(2+)-binding residues include Asp-82 and Asp-84. Zn(2+) contacts are provided by Cys-98 and Cys-105.

The protein belongs to the PRA-CH family. In terms of assembly, homodimer. It depends on Mg(2+) as a cofactor. Zn(2+) serves as cofactor.

Its subcellular location is the cytoplasm. It carries out the reaction 1-(5-phospho-beta-D-ribosyl)-5'-AMP + H2O = 1-(5-phospho-beta-D-ribosyl)-5-[(5-phospho-beta-D-ribosylamino)methylideneamino]imidazole-4-carboxamide. It participates in amino-acid biosynthesis; L-histidine biosynthesis; L-histidine from 5-phospho-alpha-D-ribose 1-diphosphate: step 3/9. In terms of biological role, catalyzes the hydrolysis of the adenine ring of phosphoribosyl-AMP. This Herminiimonas arsenicoxydans protein is Phosphoribosyl-AMP cyclohydrolase.